A 311-amino-acid chain; its full sequence is p-hydroxybenzoic acid efflux pump subunit AaeA (311 aa).

Residues 11–31 (IGITLLVVLLAVIAIFKVWAF) traverse the membrane as a helical segment.

This sequence belongs to the membrane fusion protein (MFP) (TC 8.A.1) family.

Its subcellular location is the cell inner membrane. In terms of biological role, forms an efflux pump with AaeB. This Yersinia enterocolitica serotype O:8 / biotype 1B (strain NCTC 13174 / 8081) protein is p-hydroxybenzoic acid efflux pump subunit AaeA.